Reading from the N-terminus, the 649-residue chain is Leucine-rich repeat transmembrane protein FLRT3 (649 aa).

The first 28 residues, 1-28 (MISAAWSIFLIGTKIGLFLQVAPLSVMA), serve as a signal peptide directing secretion. Positions 29–58 (KSCPSVCRCDAGFIYCNDRFLTSIPTGIPE) constitute an LRRNT domain. At 29–528 (KSCPSVCRCD…KEPYKNPNLP (500 aa)) the chain is on the extracellular side. 2 disulfides stabilise this stretch: C31–C37 and C35–C44. Positions 38 to 67 (DAGFIYCNDRFLTSIPTGIPEDATTLYLQN) are interaction with ADGRL3. 10 LRR repeats span residues 59-80 (DATTLYLQNNQINNAGIPSDLK), 84-104 (KVERIYLYHNSLDEFPTNLPK), 105-126 (YVKELHLQENNIRTITYDSLSK), 129-150 (YLEELHLDDNSVSAVSIEEGAF), 155-175 (YLRLLFLSRNHLSTIPWGLPR), 176-197 (TIEELRLDDNRISTISSPSLQG), 200-220 (SLKRLVLDGNLLNNHGLGDKV), 226-247 (NLTELSLVRNSLTAAPVNLPGT), 248-269 (NLRKLYLQDNHINRVPPNAFSY), and 272-293 (QLYRLDMSNNNLSNLPQGIFDD). N-linked (GlcNAc...) asparagine glycosylation is present at N226. Residues N282 and N296 are each glycosylated (N-linked (GlcNAc...) asparagine). One can recognise an LRRCT domain in the interval 305-357 (NPWYCGCKMKWVRDWLQSLPVKVNVRGLMCQAPEKVRGMAIKDLNAELFDCKD). C309 and C334 are disulfide-bonded. The disordered stretch occupies residues 387–407 (KQPDIKNPKLTKDHQTTGSPS). Positions 389 to 401 (PDIKNPKLTKDHQ) are enriched in basic and acidic residues. Residues 409–504 (KTITITVKSV…VCIETETAPL (96 aa)) form the Fibronectin type-III domain. The helical transmembrane segment at 529–549 (LAAIIGGAVALVTIALLALVC) threads the bilayer. Residues 550–649 (WYVHRNGSLF…GIPDSDHSHS (100 aa)) are Cytoplasmic-facing. Residues 622-649 (LYKNNHSESSSNRSYRDSGIPDSDHSHS) form a disordered region.

Monomer and homodimer. Self-associates (via leucine-rich repeats), giving rise to homooligomers. Interacts with FGFR1. Interacts (via extracellular domain) with ADGRL1/LPHN1 and LPHN2 (via olfactomedin-like domain). Interacts (via extracellular domain) with ADGRL3 (via olfactomedin-like domain); the interaction is direct. Interacts (via extracellular domain) with UNC5B and UNC5D (via extracellular domain); the interaction is direct. Identified in complexes composed of FLRT3, ADGRL3 and UNC5B, respectively FLRT3, ADGRL3 and UNC5D. May also interact (via extracellular domain) with UNC5A and UNC5C. Interacts (via cytoplasmic domain) with ROBO1. In terms of processing, N-glycosylated. Proteolytic cleavage in the juxtamembrane region gives rise to a soluble ectodomain. Cleavage is probably effected by a metalloprotease. In terms of tissue distribution, expressed in kidney, brain, pancreas, skeletal muscle, lung, liver, placenta, and heart.

It localises to the cell membrane. It is found in the presynaptic cell membrane. The protein resides in the endoplasmic reticulum membrane. The protein localises to the cell junction. Its subcellular location is the focal adhesion. It localises to the secreted. It is found in the cell projection. The protein resides in the axon. The protein localises to the growth cone membrane. Its function is as follows. Functions in cell-cell adhesion, cell migration and axon guidance, exerting an attractive or repulsive role depending on its interaction partners. Plays a role in the spatial organization of brain neurons. Plays a role in vascular development in the retina. Plays a role in cell-cell adhesion via its interaction with ADGRL3 and probably also other latrophilins that are expressed at the surface of adjacent cells. Interaction with the intracellular domain of ROBO1 mediates axon attraction towards cells expressing NTN1. Mediates axon growth cone collapse and plays a repulsive role in neuron guidance via its interaction with UNC5B, and possibly also other UNC-5 family members. Promotes neurite outgrowth (in vitro). Mediates cell-cell contacts that promote an increase both in neurite number and in neurite length. Plays a role in the regulation of the density of glutamaergic synapses. Plays a role in fibroblast growth factor-mediated signaling cascades. Required for normal morphogenesis during embryonic development, but not for normal embryonic patterning. Required for normal ventral closure, headfold fusion and definitive endoderm migration during embryonic development. Required for the formation of a normal basement membrane and the maintenance of a normal anterior visceral endoderm during embryonic development. The sequence is that of Leucine-rich repeat transmembrane protein FLRT3 (FLRT3) from Homo sapiens (Human).